A 325-amino-acid polypeptide reads, in one-letter code: Large ribosomal subunit protein uL18 (325 aa).

The interval 247-300 is disordered; the sequence is IRIPPSRRNPRRRSPRSGGRWPSCRSPPARRRSRSTRPTSWPRSRPTSKPKRPR. Low complexity-rich tracts occupy residues 262–273 and 282–291; these read RSGGRWPSCRSP and TRPTSWPRSR.

The protein belongs to the universal ribosomal protein uL18 family. As to quaternary structure, component of the large ribosomal subunit (LSU).

Its subcellular location is the cytoplasm. The protein resides in the nucleus. Component of the ribosome, a large ribonucleoprotein complex responsible for the synthesis of proteins in the cell. The small ribosomal subunit (SSU) binds messenger RNAs (mRNAs) and translates the encoded message by selecting cognate aminoacyl-transfer RNA (tRNA) molecules. The large subunit (LSU) contains the ribosomal catalytic site termed the peptidyl transferase center (PTC), which catalyzes the formation of peptide bonds, thereby polymerizing the amino acids delivered by tRNAs into a polypeptide chain. The nascent polypeptides leave the ribosome through a tunnel in the LSU and interact with protein factors that function in enzymatic processing, targeting, and the membrane insertion of nascent chains at the exit of the ribosomal tunnel. This is Large ribosomal subunit protein uL18 (RpL5) from Anopheles gambiae (African malaria mosquito).